The following is a 289-amino-acid chain: MIVCPNCNHPNPDGAVQCEACYTPLPATSNCPNCGATVQSDAAFCGQCGFNLHSVAAPAATVATIAPDVPVEVPPLANPDPLLELLQPNALGLDPVANENPPAPAPLPPTAVAAPPDATPVVVEVTPAPPPPEPVVVEASIPTPPPEPVAPPEPVPAVEPAPAPETVVAAPPSPARTQLQQITARLVHVQSDQEIELPPSLSVVHIGKPNDRIPPDVDVSGFANSEIVSRVHADIRLEGDAHYIEDVGSSNGTYINNLPLLPGNRHRLRPGDRISLGKGDLVTFLFKLA.

The DZANK-type zinc-finger motif lies at 4 to 49 (CPNCNHPNPDGAVQCEACYTPLPATSNCPNCGATVQSDAAFCGQCG). A zinc finger spans residues 18–48 (CEACYTPLPATSNCPNCGATVQSDAAFCGQC). An FHA domain is found at 204 to 260 (VHIGKPNDRIPPDVDVSGFANSEIVSRVHADIRLEGDAHYIEDVGSSNGTYINNLPL).

In terms of biological role, putative heterocyst to vegetative cell connection. In Nostoc sp. (strain PCC 7120 / SAG 25.82 / UTEX 2576), this protein is Protein FraH (fraH).